Here is a 371-residue protein sequence, read N- to C-terminus: Homoserine O-acetyltransferase (371 aa).

In terms of domain architecture, AB hydrolase-1 spans N44–E350. The active-site Nucleophile is S150. R217 is a substrate binding site. Residues D311 and H344 contribute to the active site. D345 provides a ligand contact to substrate.

This sequence belongs to the AB hydrolase superfamily. MetX family. As to quaternary structure, homodimer.

Its subcellular location is the cytoplasm. It catalyses the reaction L-homoserine + acetyl-CoA = O-acetyl-L-homoserine + CoA. It participates in amino-acid biosynthesis; L-methionine biosynthesis via de novo pathway; O-acetyl-L-homoserine from L-homoserine: step 1/1. In terms of biological role, transfers an acetyl group from acetyl-CoA to L-homoserine, forming acetyl-L-homoserine. This is Homoserine O-acetyltransferase from Pelobacter propionicus (strain DSM 2379 / NBRC 103807 / OttBd1).